The chain runs to 470 residues: UDP-N-acetylmuramate--L-alanine ligase (470 aa).

118–124 (GTHGKTT) is an ATP binding site.

The protein belongs to the MurCDEF family.

The protein localises to the cytoplasm. It carries out the reaction UDP-N-acetyl-alpha-D-muramate + L-alanine + ATP = UDP-N-acetyl-alpha-D-muramoyl-L-alanine + ADP + phosphate + H(+). Its pathway is cell wall biogenesis; peptidoglycan biosynthesis. Functionally, cell wall formation. The chain is UDP-N-acetylmuramate--L-alanine ligase from Cereibacter sphaeroides (strain ATCC 17029 / ATH 2.4.9) (Rhodobacter sphaeroides).